The chain runs to 319 residues: HTH-type transcriptional regulator YidZ (319 aa).

The HTH lysR-type domain maps to 8–65 (LDLNLLLCLQLLMQERSVTKAAKRMNVTPSAVSKSLAKLRAWFDDPLFVNSPLGLSPT). The H-T-H motif DNA-binding region spans 25 to 44 (VTKAAKRMNVTPSAVSKSLA).

The protein belongs to the LysR transcriptional regulatory family.

Involved in anaerobic NO protection. In Escherichia coli O139:H28 (strain E24377A / ETEC), this protein is HTH-type transcriptional regulator YidZ.